The primary structure comprises 287 residues: MKIKKAIIPAAGLGTRFLPATKAMPKEMLPILDKPTIQYIVEEAVAAGIEDIIIVTGKHKRAIEDHFDNQKELEMILEEKGKSDLLQSVKYSSNLANMFYVRQKEQKGLGHAIWTARQFIGNEPFAVLLGDDIVQADTPAIKQLMNQYETTGKSIIGVQQVNEIETHRYGIVDPEESYNELFSVNKFVEKPEIGTAPSNLAIMGRYVLKPDIFDYLERQEIGRGGEIQLTDAIEHLNSEDCVYAYNFEGERYDVGEKIGFVKTTIQFALKDDYMKKEITEFIKSINK.

It belongs to the UDPGP type 2 family.

It catalyses the reaction alpha-D-glucose 1-phosphate + UTP + H(+) = UDP-alpha-D-glucose + diphosphate. It participates in glycolipid metabolism; diglucosyl-diacylglycerol biosynthesis. Its function is as follows. Catalyzes the formation of UDP-glucose from glucose-1-phosphate and UTP. This is an intermediate step in the biosynthesis of diglucosyl-diacylglycerol (Glc2-DAG), i.e. a glycolipid found in the membrane, which is also used as a membrane anchor for lipoteichoic acid (LTA). The protein is UTP--glucose-1-phosphate uridylyltransferase 1 (gtaB1) of Staphylococcus saprophyticus subsp. saprophyticus (strain ATCC 15305 / DSM 20229 / NCIMB 8711 / NCTC 7292 / S-41).